An 84-amino-acid chain; its full sequence is Small ribosomal subunit protein uS17 (84 aa).

The protein belongs to the universal ribosomal protein uS17 family. Part of the 30S ribosomal subunit.

Its function is as follows. One of the primary rRNA binding proteins, it binds specifically to the 5'-end of 16S ribosomal RNA. This is Small ribosomal subunit protein uS17 from Legionella pneumophila (strain Paris).